The sequence spans 909 residues: UPF0182 protein Moth_1139 (909 aa).

The next 7 helical transmembrane spans lie at 8 to 28, 51 to 71, 103 to 123, 165 to 185, 201 to 221, 245 to 265, and 277 to 297; these read FCLL…SHFL, VGIR…NLLF, LGIL…PLAA, LLIT…FIFN, LVHF…GFRL, LLPG…IIVL, and AGIL…PLAV. The segment at 843 to 862 is disordered; the sequence is PAPAASPQPPSQAATGSPGN.

The protein belongs to the UPF0182 family.

The protein resides in the cell membrane. This Moorella thermoacetica (strain ATCC 39073 / JCM 9320) protein is UPF0182 protein Moth_1139.